Consider the following 177-residue polypeptide: MPVIEKKRTRDLPQINERIRFPKIRVIDTDGSQLGILTPQEALQLAEEKELDLVLLSDKADPPVCRIMDYGKYKFEQEKKAREARKKQHTADVKEVKMRYKIEEHDYNVRVKQAERFLKDGDKVKATVMFRGREIQHSDLAEDLLKRMATDLEPFGEVQQAPKKEGRNMMMLISPKK.

Belongs to the IF-3 family. As to quaternary structure, monomer.

The protein resides in the cytoplasm. Its function is as follows. IF-3 binds to the 30S ribosomal subunit and shifts the equilibrium between 70S ribosomes and their 50S and 30S subunits in favor of the free subunits, thus enhancing the availability of 30S subunits on which protein synthesis initiation begins. The polypeptide is Translation initiation factor IF-3 (Nostoc sp. (strain PCC 7120 / SAG 25.82 / UTEX 2576)).